The chain runs to 814 residues: Rho GTPase-activating protein 26 (814 aa).

Residues E7–T262 enclose the BAR domain. Residues P265–P369 enclose the PH domain. The region spanning A383–F568 is the Rho-GAP domain. Positions L624–S648 are enriched in low complexity. The segment at L624–S696 is disordered. Over residues S662–P672 the composition is skewed to pro residues. Position 668 is a phosphoserine (S668). T670 carries the phosphothreonine modification. S671 carries the phosphoserine modification. A compositionally biased stretch (low complexity) spans L673–S696. An SH3 domain is found at T756–L814.

Interacts with NYAP1, NYAP2 and MYO16. Interacts with MICAL1 and WDR44. Binds to the C-terminus of PTK2/FAK1. As to quaternary structure, (Microbial infection) Interacts with human parainfluenza virus type 2 proteins P and V. In terms of processing, phosphorylated in a PINK1-dependent fashion promoting retrograde mitochondrial trafficking and clustering.

The protein localises to the endosome membrane. It is found in the cytoplasm. It localises to the cell junction. The protein resides in the focal adhesion. Its subcellular location is the cytoskeleton. GTPase-activating protein for RHOA and CDC42. Facilitates mitochondrial quality control by promoting Parkin-mediated recruitment of autophagosomes to damaged mitochondria. Negatively regulates the growth of human parainfluenza virus type 2 by inhibiting hPIV-2-mediated RHOA activation via interaction with two of its viral proteins P and V. In terms of biological role, associates with MICAL1 on the endosomal membrane to promote Rab8-Rab10-dependent tubule extension. After dissociation of MICAL1, recruits WDR44 which connects the endoplasmic reticulum (ER) with the endosomal tubule, thereby participating in the export of a subset of neosynthesized proteins. The sequence is that of Rho GTPase-activating protein 26 (ARHGAP26) from Homo sapiens (Human).